The sequence spans 89 residues: Small ribosomal subunit protein uS15 (89 aa).

The protein belongs to the universal ribosomal protein uS15 family. In terms of assembly, part of the 30S ribosomal subunit. Forms a bridge to the 50S subunit in the 70S ribosome, contacting the 23S rRNA.

In terms of biological role, one of the primary rRNA binding proteins, it binds directly to 16S rRNA where it helps nucleate assembly of the platform of the 30S subunit by binding and bridging several RNA helices of the 16S rRNA. Functionally, forms an intersubunit bridge (bridge B4) with the 23S rRNA of the 50S subunit in the ribosome. This chain is Small ribosomal subunit protein uS15, found in Levilactobacillus brevis (strain ATCC 367 / BCRC 12310 / CIP 105137 / JCM 1170 / LMG 11437 / NCIMB 947 / NCTC 947) (Lactobacillus brevis).